The primary structure comprises 247 residues: Flagellar brake protein YcgR 2 (247 aa).

One can recognise a PilZ domain in the interval 124-237; that stretch reads QRREYFRVET…DETRIQRYIA (114 aa).

It belongs to the YcgR family. As to quaternary structure, monomer. Interacts with the flagellar basal bodies.

Its subcellular location is the bacterial flagellum basal body. Acts as a flagellar brake, regulating swimming and swarming in a bis-(3'-5') cyclic diguanylic acid (c-di-GMP)-dependent manner. Binds 1 c-di-GMP dimer per subunit. Increasing levels of c-di-GMP lead to decreased motility. This is Flagellar brake protein YcgR 2 from Dechloromonas aromatica (strain RCB).